Here is a 490-residue protein sequence, read N- to C-terminus: DENN domain-containing protein 11 (490 aa).

The interval 1 to 86 (MVEQSDRAPL…GGDALAEEDE (86 aa)) is disordered. The uDENN domain occupies 19 to 221 (AELAPSVPSP…QLQCPGQYSP (203 aa)). Polar residues-rich tracts occupy residues 30-43 (TGDSLQSGLSSYPT) and 52-61 (TLNTSPTRPS). The 149-residue stretch at 249-397 (LAPIVNRCMH…LNSADREKYR (149 aa)) folds into the cDENN domain. The dDENN domain maps to 399–490 (LCEQRQLLLY…MLVIDNPCCP (92 aa)).

Belongs to the DENND11 family.

Functionally, probable guanine nucleotide exchange factor (GEF). May promote the exchange of GDP to GTP, converting inactive GDP-bound small GTPases into their active GTP-bound form. The polypeptide is DENN domain-containing protein 11 (dennd11) (Danio rerio (Zebrafish)).